An 89-amino-acid polypeptide reads, in one-letter code: UPF0367 protein CYB_2632 (89 aa).

Residues 69 to 89 are disordered; the sequence is SKSGSASPMGTRPGFLAQLQS.

Belongs to the UPF0367 family.

The chain is UPF0367 protein CYB_2632 from Synechococcus sp. (strain JA-2-3B'a(2-13)) (Cyanobacteria bacterium Yellowstone B-Prime).